The sequence spans 256 residues: Astacin-like metalloprotease toxin 2 (256 aa).

An N-terminal signal peptide occupies residues 1-24 (MIPDVGFLVLLTGALFICIKAAPA). Positions 25–52 (TTDVDPTFEGRIVMEGDILIREEQLTER) are excised as a propeptide. The Peptidase M12A domain maps to 53 to 250 (NAIALENMRW…KKINTLYNCP (198 aa)). 2 disulfide bridges follow: cysteine 94-cysteine 249 and cysteine 117-cysteine 136. Zn(2+) is bound at residue histidine 144. Glutamate 145 is a catalytic residue. Histidine 148 and histidine 154 together coordinate Zn(2+).

In terms of assembly, monomer. The cofactor is Zn(2+). Expressed by the venom gland.

The protein resides in the secreted. Its activity is regulated as follows. Inhibited by 1,10-phenanthroline. Its function is as follows. Zinc metalloprotease. Provoques deadhesion of endothelial cells from cell cultures, and also degradation of fibronectin, fibrinogen and gelatin in vitro. Its role in the venom is not fully understood but it might act as a spreading factor that facilitates diffusion of other venom toxins. Alternatively, it might be involved in the proteolytic processing of other venom toxins or it might play a role in extra-oral digestion of prey. This Loxosceles intermedia (Brown spider) protein is Astacin-like metalloprotease toxin 2.